The following is a 324-amino-acid chain: Disintegrin-like/cysteine-rich protein MPIII-3 (324 aa).

Residues 1–20 (MIQVLLVIICLAVFPYQVSS) form the signal peptide. Residues 21–173 (IILESGNINN…DEDPKKCEFR (153 aa)) constitute a propeptide, or 174 (in a minor form). In terms of domain architecture, Disintegrin; truncated spans 168–207 (KKCEFRRAGTECRPARSECDVAEYCTGQSAECPTDVFHSN). An inhibits platelet aggregation region spans residues 179–192 (CRPARSECDVAEYC). 9 cysteine pairs are disulfide-bonded: C179-C199, C186-C218, C192-C199, C211-C223, C230-C280, C245-C287, C258-C268, C275-C312, and C306-C317. A D/ECD-tripeptide motif is present at residues 185–187 (ECD). The Ca(2+) site is built by D187 and E190. Ca(2+) contacts are provided by D202 and V203. N-linked (GlcNAc...) asparagine glycosylation occurs at N237.

It belongs to the venom metalloproteinase (M12B) family. P-III subfamily. P-IIIe sub-subfamily. Monomer. Is able to form a homodimer. N-glycosylated. Exists in at least six differently N-glycosylated forms. The glycans likely have a stabilizing purpose. Post-translationally, cys-199 forms a disulfide bond with Cys-192 in 90% and with Cys-179 in 10% of the protein molecules; alternative disulfide bonds may have a major effect on the conformation of the protein. In terms of tissue distribution, expressed by the venom gland (at protein level). Expressed by the venom gland.

It is found in the secreted. Its activity is regulated as follows. Activity may be regulated by the intramolecular thiol-disulfide exchange or disulfide bond switching. In terms of biological role, abolishes platelet aggregation induced by collagen, ADP (IC(50)=292 nM) and arachidonic-acid. The inhibition of collagen-induced platelet aggregation may be due to its ability to bind collagen and block the binding site on collagen for platelets and/or to its ability to bind to the platelet alpha-2/beta-1 collagen receptor (ITGA2/ITGB1) to block its interaction with collagen and hence prevent platelet stimulation. The inhibition of ADP- or arachidonic-acid-induced platelet aggregation may be due to it acting as an antagonist of the ADP receptors or thromboxane-prostanoid receptors of the platelets, respectively. Does not interact with integrins alpha-IIb (ITGA2B) or beta-3 (ITGB3) nor platelet glycoproteins VI (GP6) or IX (GP9) in vitro, however, the detection is dependent on experimental conditions and may happen in vivo. Able to bind to platelet glycoprotein Ib alpha chain (GP1BA) receptor in vitro, although this interaction may have pathologically only limited effect in vivo as it is not able to abolish the von Willebrand factor (vWF)-dependent platelet agglutination induced by ristocetin. Does not affect blood coagulation. The protein is Disintegrin-like/cysteine-rich protein MPIII-3 of Vipera ammodytes ammodytes (Western sand viper).